Consider the following 910-residue polypeptide: Lysine-specific demethylase 7 homolog (910 aa).

The segment covering 1-11 (MDGNDINIQKN) has biased composition (polar residues). Disordered regions lie at residues 1-58 (MDGN…HQTP), 103-162 (NKMG…GSEP), and 183-212 (QEEL…DRCG). The span at 25–35 (QHSDHKNHESA) shows a compositional bias: basic and acidic residues. Over residues 43–58 (YTASQPALSSTEHQTP) the composition is skewed to polar residues. The segment covering 118–130 (PKSEPKIEPHVTD) has biased composition (basic and acidic residues). The span at 150-160 (ESNQNYVSNGS) shows a compositional bias: polar residues. Basic and acidic residues predominate over residues 200 to 210 (PEQKTPKESDR). The PHD-type zinc finger occupies 208–290 (SDRCGGCGKF…KFFCPKCVPH (83 aa)). The region spanning 441–612 (SDNNEMKEIA…MQMRVYHLEN (172 aa)) is the JmjC domain. Substrate-binding positions include 505–510 (TDFHVD), Y518, K525, and H580. Residues H508 and D510 each coordinate Fe cation. Residue H580 participates in Fe cation binding. Disordered regions lie at residues 712–790 (KIQN…PSEV) and 864–910 (EAVH…KLKM). The segment covering 748-757 (YKKKYTKKAK) has biased composition (basic residues). The segment covering 758 to 780 (KDNDDAPKVKKAKKEEVPEEKVP) has biased composition (basic and acidic residues).

This sequence belongs to the JHDM1 histone demethylase family. JHDM1D subfamily. It depends on Fe(2+) as a cofactor. Mainly expressed in neurons. Also weakly expressed in some muscle, intestinal and hypodermal cells.

It localises to the nucleus. Its activity is regulated as follows. Competitively inhibited by 2-hydroxyglutarate. Functionally, histone demethylase required for nervous system development. Specifically demethylates dimethylated 'Lys-9', 'Lys-23' and 'Lys-27' (H3K9me2, H3K23me2 and H3K27me2, respectively) of histone H3, thereby playing a central role in histone code. Promotes mitochondrial stress-induced longevity. The protein is Lysine-specific demethylase 7 homolog (jmjd-1.2) of Caenorhabditis elegans.